The sequence spans 284 residues: uncharacterized protein (284 aa).

The next 3 membrane-spanning stretches (helical) occupy residues 174 to 194, 217 to 237, and 241 to 261; these read LFVL…YISI, MLIP…PGTA, and LIVL…SGSC.

It localises to the membrane. This is an uncharacterized protein from Saccharomyces cerevisiae (strain ATCC 204508 / S288c) (Baker's yeast).